A 224-amino-acid chain; its full sequence is Adenylate kinase (224 aa).

10-15 (GSGKST) is a binding site for ATP. An NMP region spans residues 30–59 (ASGDIIRAEINKGNALGREMKKYIEKGDLL). AMP is bound by residues S31, R36, 57 to 59 (DLL), 83 to 86 (GYPR), and Q90. An LID region spans residues 124–161 (GRRICRQCGAVYHIKYNPSKVPGKCDICGGEVIQREDD). R125 is a binding site for ATP. 2 residues coordinate Zn(2+): C128 and C131. 134–135 (VY) is a binding site for ATP. Zn(2+) contacts are provided by C148 and C151. R158 and R169 together coordinate AMP. G197 is a binding site for ATP.

The protein belongs to the adenylate kinase family. As to quaternary structure, monomer.

It is found in the cytoplasm. It carries out the reaction AMP + ATP = 2 ADP. Its pathway is purine metabolism; AMP biosynthesis via salvage pathway; AMP from ADP: step 1/1. In terms of biological role, catalyzes the reversible transfer of the terminal phosphate group between ATP and AMP. Plays an important role in cellular energy homeostasis and in adenine nucleotide metabolism. The sequence is that of Adenylate kinase from Thermococcus sibiricus (strain DSM 12597 / MM 739).